The following is a 354-amino-acid chain: Probable cinnamyl alcohol dehydrogenase 1 (354 aa).

Zn(2+)-binding residues include Cys47, His69, Glu70, Cys100, Cys103, Cys106, Cys114, and Cys163. NADP(+) is bound by residues Thr167, 188–193 (GLGGLG), 211–216 (STSESK), Thr251, and 297–299 (SVT).

This sequence belongs to the zinc-containing alcohol dehydrogenase family. As to quaternary structure, homodimer. It depends on Zn(2+) as a cofactor.

The enzyme catalyses (E)-cinnamyl alcohol + NADP(+) = (E)-cinnamaldehyde + NADPH + H(+). It catalyses the reaction (E)-coniferol + NADP(+) = (E)-coniferaldehyde + NADPH + H(+). It carries out the reaction (E)-sinapyl alcohol + NADP(+) = (E)-sinapaldehyde + NADPH + H(+). The catalysed reaction is (E)-4-coumaroyl alcohol + NADP(+) = (E)-4-coumaraldehyde + NADPH + H(+). The enzyme catalyses (E)-caffeyl alcohol + NADP(+) = (E)-caffeyl aldehyde + NADPH + H(+). Its pathway is aromatic compound metabolism; phenylpropanoid biosynthesis. Its function is as follows. Involved in lignin biosynthesis. Catalyzes the final step specific for the production of lignin monomers. Catalyzes the NADPH-dependent reduction of coniferaldehyde, 5-hydroxyconiferaldehyde, sinapaldehyde, 4-coumaraldehyde and caffeyl aldehyde to their respective alcohols. In Oryza sativa subsp. japonica (Rice), this protein is Probable cinnamyl alcohol dehydrogenase 1.